We begin with the raw amino-acid sequence, 265 residues long: MNRILSVTFYLFFIYLYIYETYGKVKNTDKELSDIYGTKYYLRSGFFNSKKCKGHKYEDLQAEGEGENDKEEDSNNEEMNIDEENGLIEGQGESEDPAKASQGGLEDPAKASQGGLEDPAKASQGGLEDPAKASQGGLEDPAKASQGGLEDPAKASQGGLEDPAKASQGGLEDPAKASQGGLEDPAKASQGGLEDPAKASQGGLEDPAKASQGGLEDPAKASQGGLEDPAKASQGGAEGHGKHAPNKENKNKNKESIKNIMNMFI.

The first 23 residues, Met-1–Gly-23, serve as a signal peptide directing secretion. The segment at Asp-59–Ile-265 is disordered. The span at Leu-60–Gly-86 shows a compositional bias: acidic residues. A run of 12 repeats spans residues Pro-97–Asp-107, Pro-108–Asp-118, Pro-119–Asp-129, Pro-130–Asp-140, Pro-141–Asp-151, Pro-152–Asp-162, Pro-163–Asp-173, Pro-174–Asp-184, Pro-185–Asp-195, Pro-196–Asp-206, Pro-207–Asp-217, and Pro-218–Asp-228. The 13 X 11 AA approximate tandem repeats of P-A-K-A-S-Q-G-G-L-E-D stretch occupies residues Pro-97–Gly-239. The 13; approximate repeat unit spans residues Pro-229–Gly-239. Residues Gly-239 to Ile-257 show a composition bias toward basic and acidic residues.

Its subcellular location is the parasitophorous vacuole. In terms of biological role, s antigens are soluble heat-stable proteins present in the sera of some infected individuals. In Plasmodium falciparum (isolate FC27 / Papua New Guinea), this protein is S-antigen protein.